The primary structure comprises 287 residues: Protease HtpX homolog (287 aa).

A run of 2 helical transmembrane segments spans residues valine 4 to leucine 24 and leucine 35 to leucine 53. Histidine 139 lines the Zn(2+) pocket. Glutamate 140 is an active-site residue. Zn(2+) is bound at residue histidine 143. 2 helical membrane passes run glycine 147–serine 167 and alanine 194–phenylalanine 214. Glutamate 219 contributes to the Zn(2+) binding site.

This sequence belongs to the peptidase M48B family. The cofactor is Zn(2+).

The protein resides in the cell inner membrane. This is Protease HtpX homolog from Desulfotalea psychrophila (strain LSv54 / DSM 12343).